The chain runs to 184 residues: Shikimate kinase (184 aa).

20–25 (GVGKSR) contributes to the ATP binding site. S24 is a binding site for Mg(2+). Substrate contacts are provided by D42, R66, and G88. R127 lines the ATP pocket. Position 146 (R146) interacts with substrate. ATP is bound at residue R162.

It belongs to the shikimate kinase family. In terms of assembly, monomer. Mg(2+) is required as a cofactor.

Its subcellular location is the cytoplasm. The enzyme catalyses shikimate + ATP = 3-phosphoshikimate + ADP + H(+). Its pathway is metabolic intermediate biosynthesis; chorismate biosynthesis; chorismate from D-erythrose 4-phosphate and phosphoenolpyruvate: step 5/7. Catalyzes the specific phosphorylation of the 3-hydroxyl group of shikimic acid using ATP as a cosubstrate. In Thermus thermophilus (strain ATCC 27634 / DSM 579 / HB8), this protein is Shikimate kinase.